Here is a 202-residue protein sequence, read N- to C-terminus: Large ribosomal subunit protein uL5 (202 aa).

A compositionally biased stretch (low complexity) spans 1 to 17; sequence MSAKAATKNATKVAVKA. Residues 1 to 30 form a disordered region; that stretch reads MSAKAATKNATKVAVKAPEATTPVETKKSK.

Belongs to the universal ribosomal protein uL5 family. Component of the large ribosomal subunit.

It localises to the nucleus. The protein resides in the cytoplasm. Its function is as follows. Component of the ribosome, a large ribonucleoprotein complex responsible for the synthesis of proteins in the cell. The small ribosomal subunit (SSU) binds messenger RNAs (mRNAs) and translates the encoded message by selecting cognate aminoacyl-transfer RNA (tRNA) molecules. The large subunit (LSU) contains the ribosomal catalytic site termed the peptidyl transferase center (PTC), which catalyzes the formation of peptide bonds, thereby polymerizing the amino acids delivered by tRNAs into a polypeptide chain. The nascent polypeptides leave the ribosome through a tunnel in the LSU and interact with protein factors that function in enzymatic processing, targeting, and the membrane insertion of nascent chains at the exit of the ribosomal tunnel. This chain is Large ribosomal subunit protein uL5 (rpl11), found in Dictyostelium discoideum (Social amoeba).